Consider the following 246-residue polypeptide: 2-C-methyl-D-erythritol 4-phosphate cytidylyltransferase (246 aa).

This sequence belongs to the IspD/TarI cytidylyltransferase family. IspD subfamily.

It carries out the reaction 2-C-methyl-D-erythritol 4-phosphate + CTP + H(+) = 4-CDP-2-C-methyl-D-erythritol + diphosphate. The protein operates within isoprenoid biosynthesis; isopentenyl diphosphate biosynthesis via DXP pathway; isopentenyl diphosphate from 1-deoxy-D-xylulose 5-phosphate: step 2/6. Catalyzes the formation of 4-diphosphocytidyl-2-C-methyl-D-erythritol from CTP and 2-C-methyl-D-erythritol 4-phosphate (MEP). The chain is 2-C-methyl-D-erythritol 4-phosphate cytidylyltransferase from Chlorobaculum tepidum (strain ATCC 49652 / DSM 12025 / NBRC 103806 / TLS) (Chlorobium tepidum).